Consider the following 483-residue polypeptide: Dual specificity protein phosphatase CDC14C (483 aa).

Residues 1–45 (MKRKSEGRSSWAAATCSPCCSLTSPSVKKIRSPTQQDPRHRDPQD) form a disordered region. A Nucleolar localization signal motif is present at residues 1–53 (MKRKSEGRSSWAAATCSPCCSLTSPSVKKIRSPTQQDPRHRDPQDDVYLDITD). The span at 12–26 (AAATCSPCCSLTSPS) shows a compositional bias: low complexity. An a region spans residues 43–197 (PQDDVYLDIT…AMQYGFLNFN (155 aa)). The linker stretch occupies residues 198 to 211 (SFNLDEYEHYEKAE). The interval 212–378 (NGDLNWIIPD…EGDYFCQKLK (167 aa)) is b. Residues 213–373 (GDLNWIIPDR…TSLWLEGDYF (161 aa)) enclose the Tyrosine-protein phosphatase domain. Residue cysteine 313 is the Phosphocysteine intermediate of the active site. The disordered stretch occupies residues 407–426 (QDQQEPEPYSDDDEINGGTQ). Acidic residues predominate over residues 408-421 (DQQEPEPYSDDDEI). Residues 444–466 (ILLTCPLAVLTSALCSVVIWWIV) traverse the membrane as a helical segment.

This sequence belongs to the protein-tyrosine phosphatase family. Non-receptor class CDC14 subfamily.

The protein resides in the membrane. The protein localises to the nucleus. It is found in the nucleolus. It localises to the cytoplasm. Its subcellular location is the cytoskeleton. It carries out the reaction O-phospho-L-tyrosyl-[protein] + H2O = L-tyrosyl-[protein] + phosphate. The catalysed reaction is O-phospho-L-seryl-[protein] + H2O = L-seryl-[protein] + phosphate. The enzyme catalyses O-phospho-L-threonyl-[protein] + H2O = L-threonyl-[protein] + phosphate. In terms of biological role, dual-specificity phosphatase. Preferentially dephosphorylates proteins modified by proline-directed kinases. In Symphalangus syndactylus (Siamang), this protein is Dual specificity protein phosphatase CDC14C.